We begin with the raw amino-acid sequence, 332 residues long: Cell division protein ZipA (332 aa).

Residues 1 to 6 lie on the Periplasmic side of the membrane; the sequence is MMQDLR. The helical transmembrane segment at 7 to 27 threads the bilayer; sequence LILIVVGAIAIIALLLHGLWT. At 28-332 the chain is on the cytoplasmic side; the sequence is SRKERSSLFR…RLREVLENNA (305 aa). Composition is skewed to basic and acidic residues over residues 34-51 and 61-72; these read SLFR…REQS and GEVRVRSAHPED. Positions 34-184 are disordered; the sequence is SLFRDRPAKR…PAVAHEPQPA (151 aa). Positions 98–107 are enriched in low complexity; it reads PAPRAVQPAA. The segment covering 121–136 has biased composition (acidic residues); the sequence is DDILLDNYAQEEDDEP. The segment covering 155–171 has biased composition (low complexity); sequence PAAEPAFHAEPAHQPQP.

Belongs to the ZipA family. In terms of assembly, interacts with FtsZ via their C-terminal domains.

Its subcellular location is the cell inner membrane. Its function is as follows. Essential cell division protein that stabilizes the FtsZ protofilaments by cross-linking them and that serves as a cytoplasmic membrane anchor for the Z ring. Also required for the recruitment to the septal ring of downstream cell division proteins. This is Cell division protein ZipA from Serratia proteamaculans (strain 568).